The following is a 551-amino-acid chain: Cysteine desulfurase SufS (551 aa).

An N-terminal signal peptide occupies residues Met1–Ser22. An N6-(pyridoxal phosphate)lysine modification is found at Lys327. Cys500 acts as the Cysteine persulfide intermediate in catalysis.

This sequence belongs to the class-V pyridoxal-phosphate-dependent aminotransferase family. Csd subfamily. Monomer. Interacts with SufE; interaction enhances cysteine desulfurase activity of SufS. It depends on pyridoxal 5'-phosphate as a cofactor.

It is found in the plastid. Its subcellular location is the apicoplast. The catalysed reaction is (sulfur carrier)-H + L-cysteine = (sulfur carrier)-SH + L-alanine. The protein operates within cofactor biosynthesis; iron-sulfur cluster biosynthesis. In terms of biological role, catalyzes sulfur activation and mobilization in sulfur mobilization (SUF) pathway for iron-sulfur (Fe-S) cluster biogenesis. Active when in complex with a partner protein SufE. Required for apicoplast maintenance. Plays a role in the development of sporozoites in oocysts in mosquitoes. This Plasmodium vivax protein is Cysteine desulfurase SufS.